Here is a 101-residue protein sequence, read N- to C-terminus: Small ribosomal subunit protein uS14 (101 aa).

It belongs to the universal ribosomal protein uS14 family. As to quaternary structure, part of the 30S ribosomal subunit. Contacts proteins S3 and S10.

Functionally, binds 16S rRNA, required for the assembly of 30S particles and may also be responsible for determining the conformation of the 16S rRNA at the A site. The protein is Small ribosomal subunit protein uS14 of Francisella tularensis subsp. holarctica (strain FTNF002-00 / FTA).